We begin with the raw amino-acid sequence, 83 residues long: Protein FAM240A (83 aa).

It belongs to the FAM240 family.

This Homo sapiens (Human) protein is Protein FAM240A.